A 458-amino-acid chain; its full sequence is PH domain-containing protein DDB_G0274775 (458 aa).

Residues 15–112 (PSDREGWLTK…WMESIKRNLD (98 aa)) form the PH domain. The tract at residues 111 to 154 (LDGEGGMKSGGNDIVSSPKINSEPTPKVNQNGSAPEKSSLSSPR) is disordered. A compositionally biased stretch (polar residues) spans 124-142 (IVSSPKINSEPTPKVNQNG). Low complexity predominate over residues 143-154 (SAPEKSSLSSPR).

The protein is PH domain-containing protein DDB_G0274775 of Dictyostelium discoideum (Social amoeba).